A 704-amino-acid chain; its full sequence is Mannan-binding lectin serine protease 1 (704 aa).

The signal sequence occupies residues 1–24; the sequence is MRFLSFWRLLLYHALCLALPEVSA. Residues 25–143 enclose the CUB 1 domain; that stretch reads HTVELNEMFG…TGFDAHYMAV (119 aa). The homodimerization stretch occupies residues 25 to 189; that stretch reads HTVELNEMFG…HTDNRTCRVE (165 aa). Residues 25-189 are interaction with MBL2; the sequence is HTVELNEMFG…HTDNRTCRVE (165 aa). The tract at residues 25–283 is interaction with FCN2; sequence HTVELNEMFG…STQTHSVQIL (259 aa). The interaction with MBL1 stretch occupies residues 25–305; the sequence is HTVELNEMFG…RLSYRAAGNE (281 aa). A glycan (N-linked (GlcNAc...) asparagine) is linked at asparagine 54. Positions 73, 81, 126, 128, 144, 145, and 147 each coordinate Ca(2+). A disulfide bridge links cysteine 78 with cysteine 96. The EGF-like; calcium-binding domain maps to 144 to 187; the sequence is DVDECKEREDEELSCDHYCHNYIGGYYCSCRFGYILHTDNRTCR. 4 disulfide bridges follow: cysteine 148/cysteine 162, cysteine 158/cysteine 171, cysteine 173/cysteine 186, and cysteine 190/cysteine 217. Residues asparagine 164, tyrosine 165, and glycine 168 each coordinate Ca(2+). Asparagine 164 carries the post-translational modification (3R)-3-hydroxyasparagine. Asparagine 183 carries an N-linked (GlcNAc...) asparagine glycan. In terms of domain architecture, CUB 2 spans 190 to 302; that stretch reads CSGNLFTQRT…RGWRLSYRAA (113 aa). Ca(2+) contacts are provided by glutamate 240, aspartate 250, aspartate 287, and serine 289. Cysteine 247 and cysteine 265 form a disulfide bridge. Sushi domains lie at 304 to 369 and 370 to 439; these read NECP…TCKI and VDCG…TCLP. 8 disulfides stabilise this stretch: cysteine 306–cysteine 354, cysteine 334–cysteine 367, cysteine 372–cysteine 419, cysteine 402–cysteine 437, cysteine 441–cysteine 577, cysteine 480–cysteine 496, cysteine 619–cysteine 636, and cysteine 647–cysteine 677. 2 N-linked (GlcNAc...) asparagine glycosylation sites follow: asparagine 390 and asparagine 412. Residues 454 to 701 enclose the Peptidase S1 domain; sequence IFNGRPAQKG…NKDWIQRITG (248 aa). Residues histidine 495 and aspartate 557 each act as charge relay system in the active site. The Charge relay system role is filled by serine 651.

This sequence belongs to the peptidase S1 family. In terms of assembly, homodimer. Interacts with the oligomeric lectins MBL2, FCN2 and FCN3; triggers the lectin pathway of complement through activation of C3. Interacts with SERPING1. Interacts with COLEC11; probably triggers the lectin pathway of complement. In terms of processing, the iron and 2-oxoglutarate dependent 3-hydroxylation of aspartate and asparagine is (R) stereospecific within EGF domains. N-glycosylated. Some N-linked glycan are of the complex-type. Post-translationally, autoproteolytic processing of the proenzyme produces the active enzyme composed on the heavy and the light chain held together by a disulfide bond. Isoform 1 but not isoform 2 is activated through autoproteolytic processing. Protein of the plasma which is primarily expressed by liver.

The protein resides in the secreted. With respect to regulation, inhibited by SERPING1 and A2M. Functionally, functions in the lectin pathway of complement, which performs a key role in innate immunity by recognizing pathogens through patterns of sugar moieties and neutralizing them. The lectin pathway is triggered upon binding of mannan-binding lectin (MBL) and ficolins to sugar moieties which leads to activation of the associated proteases MASP1 and MASP2. Functions as an endopeptidase and may activate MASP2 or C2 or directly activate C3 the key component of complement reaction. Isoform 2 may have an inhibitory effect on the activation of the lectin pathway of complement or may cleave IGFBP5. Also plays a role in development. The polypeptide is Mannan-binding lectin serine protease 1 (Masp1) (Mus musculus (Mouse)).